The sequence spans 410 residues: LL-diaminopimelate aminotransferase (410 aa).

Substrate is bound by residues Tyr-15 and Gly-42. Residues Tyr-72, 108 to 109 (AK), Tyr-132, Asn-188, Tyr-219, and 247 to 249 (SFS) each bind pyridoxal 5'-phosphate. Residues Lys-109, Tyr-132, and Asn-188 each coordinate substrate. Position 250 is an N6-(pyridoxal phosphate)lysine (Lys-250). Positions 258 and 293 each coordinate pyridoxal 5'-phosphate. Residues Asn-293 and Arg-389 each contribute to the substrate site.

Belongs to the class-I pyridoxal-phosphate-dependent aminotransferase family. LL-diaminopimelate aminotransferase subfamily. Homodimer. Pyridoxal 5'-phosphate serves as cofactor.

It carries out the reaction (2S,6S)-2,6-diaminopimelate + 2-oxoglutarate = (S)-2,3,4,5-tetrahydrodipicolinate + L-glutamate + H2O + H(+). It functions in the pathway amino-acid biosynthesis; L-lysine biosynthesis via DAP pathway; LL-2,6-diaminopimelate from (S)-tetrahydrodipicolinate (aminotransferase route): step 1/1. In terms of biological role, involved in the synthesis of meso-diaminopimelate (m-DAP or DL-DAP), required for both lysine and peptidoglycan biosynthesis. Catalyzes the direct conversion of tetrahydrodipicolinate to LL-diaminopimelate. In Bacteroides thetaiotaomicron (strain ATCC 29148 / DSM 2079 / JCM 5827 / CCUG 10774 / NCTC 10582 / VPI-5482 / E50), this protein is LL-diaminopimelate aminotransferase.